The sequence spans 544 residues: uncharacterized protein (544 aa).

Positions 1–34 are cleaved as a signal peptide; the sequence is MIARRMLCARPWGPSCVVCALCGALAALVPAVGA. Residues 38–69 are disordered; that stretch reads AVPAPGTPAPPAHTASEAVPPAPEPRAEGEQP.

It belongs to the TP096X family.

This is an uncharacterized protein from Treponema pallidum (strain Nichols).